Here is a 931-residue protein sequence, read N- to C-terminus: Protein translocase subunit SecA (931 aa).

Residues Gln87, 105–109 (GEGKT), and Asp523 each bind ATP. The Zn(2+) site is built by Cys915, Cys917, Cys926, and His927.

It belongs to the SecA family. In terms of assembly, monomer and homodimer. Part of the essential Sec protein translocation apparatus which comprises SecA, SecYEG and auxiliary proteins SecDF-YajC and YidC. The cofactor is Zn(2+).

Its subcellular location is the cell inner membrane. The protein resides in the cytoplasm. It catalyses the reaction ATP + H2O + cellular proteinSide 1 = ADP + phosphate + cellular proteinSide 2.. Its function is as follows. Part of the Sec protein translocase complex. Interacts with the SecYEG preprotein conducting channel. Has a central role in coupling the hydrolysis of ATP to the transfer of proteins into and across the cell membrane, serving both as a receptor for the preprotein-SecB complex and as an ATP-driven molecular motor driving the stepwise translocation of polypeptide chains across the membrane. This Xanthobacter autotrophicus (strain ATCC BAA-1158 / Py2) protein is Protein translocase subunit SecA.